The chain runs to 188 residues: Probable chorismate pyruvate-lyase (188 aa).

Positions 77, 115, and 174 each coordinate substrate.

Belongs to the UbiC family.

The protein resides in the cytoplasm. It carries out the reaction chorismate = 4-hydroxybenzoate + pyruvate. It participates in cofactor biosynthesis; ubiquinone biosynthesis. Functionally, removes the pyruvyl group from chorismate, with concomitant aromatization of the ring, to provide 4-hydroxybenzoate (4HB) for the ubiquinone pathway. This Shewanella loihica (strain ATCC BAA-1088 / PV-4) protein is Probable chorismate pyruvate-lyase.